The sequence spans 128 residues: Small ribosomal subunit protein uS13 (128 aa).

Basic residues predominate over residues 95–118; sequence GLPVRGQRTHTNARTRKGPKKGLV. Positions 95–128 are disordered; it reads GLPVRGQRTHTNARTRKGPKKGLVRKAAAPAPMA.

This sequence belongs to the universal ribosomal protein uS13 family. As to quaternary structure, part of the 30S ribosomal subunit. Forms a loose heterodimer with protein S19. Forms two bridges to the 50S subunit in the 70S ribosome.

Located at the top of the head of the 30S subunit, it contacts several helices of the 16S rRNA. In the 70S ribosome it contacts the 23S rRNA (bridge B1a) and protein L5 of the 50S subunit (bridge B1b), connecting the 2 subunits; these bridges are implicated in subunit movement. Contacts the tRNAs in the A and P-sites. The sequence is that of Small ribosomal subunit protein uS13 from Anaeromyxobacter dehalogenans (strain 2CP-1 / ATCC BAA-258).